The following is a 662-amino-acid chain: Glycogen debranching enzyme (662 aa).

Asp338 acts as the Nucleophile in catalysis. Residue Glu373 is the Proton donor of the active site.

This sequence belongs to the glycosyl hydrolase 13 family.

The catalysed reaction is Hydrolysis of (1-&gt;6)-alpha-D-glucosidic linkages to branches with degrees of polymerization of three or four glucose residues in limit dextrin.. Its pathway is glycan degradation; glycogen degradation. Removes maltotriose and maltotetraose chains that are attached by 1,6-alpha-linkage to the limit dextrin main chain, generating a debranched limit dextrin. The chain is Glycogen debranching enzyme from Yersinia pseudotuberculosis serotype IB (strain PB1/+).